The sequence spans 511 residues: Cytochrome P450 714C3 (511 aa).

Topologically, residues 1 to 6 are lumenal; that stretch reads MEKLLA. Residues 7–27 traverse the membrane as a helical; Signal-anchor for type III membrane protein segment; sequence LIVVLVILLSLALFYLCNILW. Residues 28–511 are Cytoplasmic-facing; sequence LRAVKIRKKL…GLPLMVTKLP (484 aa). C458 is a binding site for heme.

It belongs to the cytochrome P450 family. Heme is required as a cofactor.

It is found in the membrane. The chain is Cytochrome P450 714C3 (CYP714C3) from Oryza sativa subsp. japonica (Rice).